A 292-amino-acid polypeptide reads, in one-letter code: Zinc metalloproteinase nas-3 (292 aa).

Positions 1-16 (MYRFIIFFSLLALTAS) are cleaved as a signal peptide. One can recognise a Peptidase M12A domain in the interval 56–249 (RGIAIHPWQW…RNINTLYKCN (194 aa)). 2 disulfide bridges follow: cysteine 103/cysteine 248 and cysteine 128/cysteine 158. Histidine 169 is a binding site for Zn(2+). Residue glutamate 170 is part of the active site. Positions 173 and 179 each coordinate Zn(2+).

The cofactor is Zn(2+).

It localises to the secreted. Metalloprotease. In Caenorhabditis elegans, this protein is Zinc metalloproteinase nas-3 (nas-3).